Consider the following 393-residue polypeptide: MLRIGKLNLSTMSSAQQRLAQVGSHLTAQKQSLAPQRPYKITVIGSGNWGTTIAKVLAENAGLRPHLFQHQVDMWVFEEKINGVNLTEIINTQHENVKYLPGIKLPKNLHAEPSIVKAAEGADLLVFNIPHQFLPGICKQLSKATLKPHVRAISCLKGLEVTPNGCKLLSTYITEHLGVHCGALSGANLAPEVAKEKWSETTVAYRLPNDFQGHGKDIDRYVLRAAFHRPYFHVRVIEDVAGVSLAGALKNVVALGVGFVHGLNWGDNAASAIQRFGLNETIKFAEVFFPGETNQDTFTKESAGVADLITTCSGGRNVRVAKAMAITGKSAVEVERELLNGQSAQGIITSKEVHELLAAKNLTKEFPLFEAIYQIVYGTESIERLPELIEEDE.

Residues 45-50 (GSGNWG), phenylalanine 133, lysine 157, and alanine 190 contribute to the NAD(+) site. A substrate-binding site is contributed by lysine 157. Lysine 250 acts as the Proton acceptor in catalysis. NAD(+) contacts are provided by arginine 316 and glutamine 345. Position 316 to 317 (316 to 317 (RN)) interacts with substrate.

The protein belongs to the NAD-dependent glycerol-3-phosphate dehydrogenase family.

The catalysed reaction is sn-glycerol 3-phosphate + NAD(+) = dihydroxyacetone phosphate + NADH + H(+). The chain is Glycerol-3-phosphate dehydrogenase [NAD(+)] 1 (gpd1) from Cyberlindnera jadinii (Torula yeast).